Consider the following 35-residue polypeptide: Photosystem II reaction center protein M (35 aa).

The chain crosses the membrane as a helical span at residues 5–25 (ILAFIATALFILVPTAFLLII).

This sequence belongs to the PsbM family. PSII is composed of 1 copy each of membrane proteins PsbA, PsbB, PsbC, PsbD, PsbE, PsbF, PsbH, PsbI, PsbJ, PsbK, PsbL, PsbM, PsbT, PsbX, PsbY, PsbZ, Psb30/Ycf12, at least 3 peripheral proteins of the oxygen-evolving complex and a large number of cofactors. It forms dimeric complexes.

It is found in the plastid. The protein localises to the chloroplast thylakoid membrane. In terms of biological role, one of the components of the core complex of photosystem II (PSII). PSII is a light-driven water:plastoquinone oxidoreductase that uses light energy to abstract electrons from H(2)O, generating O(2) and a proton gradient subsequently used for ATP formation. It consists of a core antenna complex that captures photons, and an electron transfer chain that converts photonic excitation into a charge separation. This subunit is found at the monomer-monomer interface. In Panax quinquefolius (American ginseng), this protein is Photosystem II reaction center protein M.